The primary structure comprises 92 residues: uncharacterized protein (92 aa).

Homolog of shope fibroma virus T4A ORF. This is an uncharacterized protein from Swinepox virus (strain Kasza) (SWPV).